The following is a 473-amino-acid chain: Envelope glycoprotein M (473 aa).

Residues Met-1–Gln-32 lie on the Intravirion side of the membrane. Residues Val-33–Phe-53 traverse the membrane as a helical segment. The Virion surface segment spans residues Arg-54 to Ser-90. The helical transmembrane segment at Leu-91–Val-111 threads the bilayer. Residues Gly-112–His-137 are Intravirion-facing. A helical transmembrane segment spans residues Ala-138–Ala-158. Topologically, residues His-159–Gln-163 are virion surface. Residues Leu-164–Cys-184 form a helical membrane-spanning segment. At Thr-185–Ala-216 the chain is on the intravirion side. A helical transmembrane segment spans residues Val-217 to Leu-237. Over Asn-238–Pro-250 the chain is Virion surface. Residues Gly-251 to Val-271 form a helical membrane-spanning segment. Residues Glu-272–Arg-280 are Intravirion-facing. Residues Val-281 to Glu-301 traverse the membrane as a helical segment. Residues His-302–Ala-318 are Virion surface-facing. The chain crosses the membrane as a helical span at residues Gln-319–Leu-339. Topologically, residues Arg-340–Trp-473 are intravirion. Disordered regions lie at residues Lys-371–Ala-399 and His-440–Trp-473.

It belongs to the herpesviridae glycoprotein M family. Interacts (via N-terminus) with gN (via N-terminus). The gM-gN heterodimer forms the gCII complex.

The protein resides in the virion membrane. It localises to the host Golgi apparatus. Its subcellular location is the host trans-Golgi network. It is found in the host endosome membrane. The protein localises to the host nucleus inner membrane. Functionally, envelope glycoprotein important for virion assembly and egress. Plays a role in the correct incorporation of gH-gL into virion membrane. Directs the glycoprotein N (gN) to the host trans-Golgi network. The sequence is that of Envelope glycoprotein M from Human herpesvirus 1 (strain 17) (HHV-1).